The chain runs to 163 residues: MEAGSWAPRRWPRPPGIVLLALASVLSSLLSSGQARVYSRCELARVLQDFGLEGYRGYSLADWICLAYFASGFNTGAVDHEADGSTNSGIFQINSRKWCKNLNPNVPNLCQMYCSDLLNPNLKDTVICAMKITQEPQGLGSWEAWRHHCQGKDLSDWVDGCEL.

The first 35 residues, 1-35 (MEAGSWAPRRWPRPPGIVLLALASVLSSLLSSGQA), serve as a signal peptide directing secretion. The C-type lysozyme domain occupies 36–163 (RVYSRCELAR…LSDWVDGCEL (128 aa)). Disulfide bonds link Cys-41–Cys-161, Cys-65–Cys-149, Cys-99–Cys-114, and Cys-110–Cys-128.

It belongs to the glycosyl hydrolase 22 family. As to quaternary structure, interacts with ASTL.

It is found in the secreted. Functionally, sperm surface membrane protein that may be involved in sperm-egg plasma membrane adhesion and fusion during fertilization. It could be a potential receptor for the egg oligosaccharide residue N-acetylglucosamine, which is present in the extracellular matrix over the egg plasma membrane. The processed form has no detectable bacteriolytic activity in vitro. This Bos taurus (Bovine) protein is Sperm acrosome membrane-associated protein 3 (SPACA3).